Reading from the N-terminus, the 96-residue chain is Citrate lyase acyl carrier protein (96 aa).

Position 14 is an O-(phosphoribosyl dephospho-coenzyme A)serine (S14).

Belongs to the CitD family. In terms of assembly, oligomer with a subunit composition of (alpha,beta,gamma)6.

The protein resides in the cytoplasm. Covalent carrier of the coenzyme of citrate lyase. The sequence is that of Citrate lyase acyl carrier protein from Pectobacterium atrosepticum (strain SCRI 1043 / ATCC BAA-672) (Erwinia carotovora subsp. atroseptica).